A 166-amino-acid polypeptide reads, in one-letter code: UPF0336 protein MT0525.1 (166 aa).

The 124-residue stretch at 8–131 (QTLIGKHYRA…VLAEIRSEVT (124 aa)) folds into the MaoC-like domain.

The protein belongs to the UPF0336 family.

In Mycobacterium tuberculosis (strain CDC 1551 / Oshkosh), this protein is UPF0336 protein MT0525.1.